We begin with the raw amino-acid sequence, 46 residues long: Esculentin-1GRa (46 aa).

In terms of tissue distribution, expressed by the skin glands.

The protein resides in the secreted. Antimicrobial peptide active against the Gram-positive bacterium S.aureus (MIC=12.5 uM) and against the Gram-negative bacterium E.coli (MIC=6 uM). Has no antifungal activity against C.albicans. Shows hemolytic activity against human erythrocytes only at high concentrations (LC(50)=210 uM). In Odorrana grahami (Yunnanfu frog), this protein is Esculentin-1GRa.